The sequence spans 279 residues: Ribosomal RNA small subunit methyltransferase J (279 aa).

S-adenosyl-L-methionine is bound by residues 138-139 and aspartate 194; that span reads ER.

Belongs to the methyltransferase superfamily. RsmJ family.

It is found in the cytoplasm. The catalysed reaction is guanosine(1516) in 16S rRNA + S-adenosyl-L-methionine = N(2)-methylguanosine(1516) in 16S rRNA + S-adenosyl-L-homocysteine + H(+). Its function is as follows. Specifically methylates the guanosine in position 1516 of 16S rRNA. This chain is Ribosomal RNA small subunit methyltransferase J, found in Acinetobacter baumannii (strain AYE).